The primary structure comprises 282 residues: 3-methyl-2-oxobutanoate hydroxymethyltransferase (282 aa).

Mg(2+) contacts are provided by aspartate 44 and aspartate 83. Residues 44 to 45 (DS), aspartate 83, and lysine 113 each bind 3-methyl-2-oxobutanoate. Glutamate 115 contacts Mg(2+). The Proton acceptor role is filled by glutamate 182.

It belongs to the PanB family. Homodecamer; pentamer of dimers. Requires Mg(2+) as cofactor.

Its subcellular location is the cytoplasm. It catalyses the reaction 3-methyl-2-oxobutanoate + (6R)-5,10-methylene-5,6,7,8-tetrahydrofolate + H2O = 2-dehydropantoate + (6S)-5,6,7,8-tetrahydrofolate. Its pathway is cofactor biosynthesis; (R)-pantothenate biosynthesis; (R)-pantoate from 3-methyl-2-oxobutanoate: step 1/2. Functionally, catalyzes the reversible reaction in which hydroxymethyl group from 5,10-methylenetetrahydrofolate is transferred onto alpha-ketoisovalerate to form ketopantoate. The chain is 3-methyl-2-oxobutanoate hydroxymethyltransferase from Dehalococcoides mccartyi (strain ATCC BAA-2266 / KCTC 15142 / 195) (Dehalococcoides ethenogenes (strain 195)).